Consider the following 182-residue polypeptide: Small heat shock protein hspG1 (182 aa).

The region spanning 43–182 (IKRIDIIPSM…SNSSFKININ (140 aa)) is the sHSP domain.

This sequence belongs to the small heat shock protein (HSP20) family.

This chain is Small heat shock protein hspG1 (hspG1), found in Dictyostelium discoideum (Social amoeba).